The sequence spans 291 residues: tRNA pseudouridine synthase-like 1 (291 aa).

Asp66 acts as the Nucleophile in catalysis. Tyr130 lines the substrate pocket.

This sequence belongs to the tRNA pseudouridine synthase TruA family.

The enzyme catalyses a uridine in tRNA = a pseudouridine in tRNA. The sequence is that of tRNA pseudouridine synthase-like 1 (Pusl1) from Mus musculus (Mouse).